Here is a 430-residue protein sequence, read N- to C-terminus: Enolase (430 aa).

Residue glutamine 167 participates in (2R)-2-phosphoglycerate binding. Residue glutamate 209 is the Proton donor of the active site. Residues aspartate 245, glutamate 286, and aspartate 313 each coordinate Mg(2+). (2R)-2-phosphoglycerate contacts are provided by lysine 338, arginine 367, serine 368, and lysine 389. Residue lysine 338 is the Proton acceptor of the active site.

The protein belongs to the enolase family. Requires Mg(2+) as cofactor.

The protein localises to the cytoplasm. Its subcellular location is the secreted. It localises to the cell surface. The catalysed reaction is (2R)-2-phosphoglycerate = phosphoenolpyruvate + H2O. It participates in carbohydrate degradation; glycolysis; pyruvate from D-glyceraldehyde 3-phosphate: step 4/5. Its function is as follows. Catalyzes the reversible conversion of 2-phosphoglycerate (2-PG) into phosphoenolpyruvate (PEP). It is essential for the degradation of carbohydrates via glycolysis. The protein is Enolase of Synechococcus sp. (strain WH7803).